The primary structure comprises 80 residues: Translation initiation factor IF-1 (80 aa).

Residues 6 to 80 (EKKKKDESDS…TSRGRIVYRR (75 aa)) form the S1-like domain.

It belongs to the IF-1 family. As to quaternary structure, component of the 30S ribosomal translation pre-initiation complex which assembles on the 30S ribosome in the order IF-2 and IF-3, IF-1 and N-formylmethionyl-tRNA(fMet); mRNA recruitment can occur at any time during PIC assembly.

The protein localises to the cytoplasm. Functionally, one of the essential components for the initiation of protein synthesis. Stabilizes the binding of IF-2 and IF-3 on the 30S subunit to which N-formylmethionyl-tRNA(fMet) subsequently binds. Helps modulate mRNA selection, yielding the 30S pre-initiation complex (PIC). Upon addition of the 50S ribosomal subunit IF-1, IF-2 and IF-3 are released leaving the mature 70S translation initiation complex. The sequence is that of Translation initiation factor IF-1 from Deinococcus radiodurans (strain ATCC 13939 / DSM 20539 / JCM 16871 / CCUG 27074 / LMG 4051 / NBRC 15346 / NCIMB 9279 / VKM B-1422 / R1).